The following is a 341-amino-acid chain: Phenylalanine--tRNA ligase alpha subunit (341 aa).

A Mg(2+)-binding site is contributed by Glu254.

The protein belongs to the class-II aminoacyl-tRNA synthetase family. Phe-tRNA synthetase alpha subunit type 1 subfamily. In terms of assembly, tetramer of two alpha and two beta subunits. Mg(2+) is required as a cofactor.

It is found in the cytoplasm. It catalyses the reaction tRNA(Phe) + L-phenylalanine + ATP = L-phenylalanyl-tRNA(Phe) + AMP + diphosphate + H(+). The polypeptide is Phenylalanine--tRNA ligase alpha subunit (Chlorobium phaeovibrioides (strain DSM 265 / 1930) (Prosthecochloris vibrioformis (strain DSM 265))).